The following is a 128-amino-acid chain: Phycoerythrin alpha-3 chain, chloroplastic (128 aa).

Residues 1 to 52 (MFAKTLASLAVIGSAAAYVPMMSMDMGRREVVQAGAAAAAVTPFLSGAPAGA) constitute a chloroplast transit peptide. At Lys-56 the chain carries 5-hydroxylysine. The segment at 70–89 (GCSRAPKESTGGKAGGQDDE) is disordered. 15,16-dihydrobiliverdin contacts are provided by residues Cys-71, Arg-73, 77–78 (ES), and Lys-93.

This sequence belongs to the phycoerythrin family. In terms of assembly, heterotetramer of 2 different alpha chains and 2 identical beta chains. The subunit composition could comprise of any combination of 2 out of 4 different alpha units with an invariant beta unit. Post-translationally, contains one covalently linked 15,16-dihydrobiliverdin chromophore.

The protein localises to the plastid. Its subcellular location is the chloroplast thylakoid membrane. Functionally, light-harvesting photosynthetic tetrapyrrole chromophore-protein from the phycobiliprotein complex. The chain is Phycoerythrin alpha-3 chain, chloroplastic (cpeA3) from Rhodomonas sp. (strain CS 24) (Chroomonas sp. (strain CS24)).